Consider the following 630-residue polypeptide: Biosynthetic arginine decarboxylase (630 aa).

Lys99 is subject to N6-(pyridoxal phosphate)lysine. Residue 281 to 291 coordinates substrate; that stretch reads VDIGGGLGVDY.

It belongs to the Orn/Lys/Arg decarboxylase class-II family. SpeA subfamily. The cofactor is Mg(2+). Requires pyridoxal 5'-phosphate as cofactor.

It carries out the reaction L-arginine + H(+) = agmatine + CO2. Catalyzes the biosynthesis of agmatine from arginine. The chain is Biosynthetic arginine decarboxylase from Bacteroides thetaiotaomicron (strain ATCC 29148 / DSM 2079 / JCM 5827 / CCUG 10774 / NCTC 10582 / VPI-5482 / E50).